Reading from the N-terminus, the 156-residue chain is ATP synthase subunit b (156 aa).

A helical transmembrane segment spans residues 7–27; the sequence is LIGQLIAFAIFVWFCMKYVWP.

Belongs to the ATPase B chain family. As to quaternary structure, F-type ATPases have 2 components, F(1) - the catalytic core - and F(0) - the membrane proton channel. F(1) has five subunits: alpha(3), beta(3), gamma(1), delta(1), epsilon(1). F(0) has three main subunits: a(1), b(2) and c(10-14). The alpha and beta chains form an alternating ring which encloses part of the gamma chain. F(1) is attached to F(0) by a central stalk formed by the gamma and epsilon chains, while a peripheral stalk is formed by the delta and b chains.

It is found in the cell inner membrane. F(1)F(0) ATP synthase produces ATP from ADP in the presence of a proton or sodium gradient. F-type ATPases consist of two structural domains, F(1) containing the extramembraneous catalytic core and F(0) containing the membrane proton channel, linked together by a central stalk and a peripheral stalk. During catalysis, ATP synthesis in the catalytic domain of F(1) is coupled via a rotary mechanism of the central stalk subunits to proton translocation. Functionally, component of the F(0) channel, it forms part of the peripheral stalk, linking F(1) to F(0). This is ATP synthase subunit b from Histophilus somni (strain 129Pt) (Haemophilus somnus).